We begin with the raw amino-acid sequence, 358 residues long: Alanine racemase (358 aa).

The Proton acceptor; specific for D-alanine role is filled by Lys34. Residue Lys34 is modified to N6-(pyridoxal phosphate)lysine. Residue Arg130 participates in substrate binding. Tyr254 (proton acceptor; specific for L-alanine) is an active-site residue. Met302 provides a ligand contact to substrate.

This sequence belongs to the alanine racemase family. It depends on pyridoxal 5'-phosphate as a cofactor.

The enzyme catalyses L-alanine = D-alanine. Its pathway is amino-acid biosynthesis; D-alanine biosynthesis; D-alanine from L-alanine: step 1/1. Its function is as follows. Catalyzes the interconversion of L-alanine and D-alanine. May also act on other amino acids. This chain is Alanine racemase (alr), found in Stutzerimonas stutzeri (strain A1501) (Pseudomonas stutzeri).